Consider the following 295-residue polypeptide: AP-1-like transcription factor YAP4 (295 aa).

3 positions are modified to phosphoserine: Ser-85, Ser-89, and Ser-196. A compositionally biased stretch (polar residues) spans 181–202 (ASYFPSNSTPATRKNSATTNLP). Positions 181 to 205 (ASYFPSNSTPATRKNSATTNLPSEE) are disordered. Positions 237–295 (PLRNTKRAAQNRSAQKAFRQRREKYIKNLEEKSKLFDGLMKENSELKKMIESLKSKLKE) constitute a bZIP domain. The basic motif stretch occupies residues 239-260 (RNTKRAAQNRSAQKAFRQRREK). Residues 262–271 (IKNLEEKSKL) form a leucine-zipper region.

The protein belongs to the bZIP family. YAP subfamily. As to quaternary structure, homodimer.

Its subcellular location is the cytoplasm. It is found in the nucleus. Its function is as follows. Transcription activator involved in the regulation of genes expressed in response to environmental changes and metabolic requirements. According to genome-wide promoter binding and gene expression studies it regulates, among others, genes involved in ribosome biogenesis, and protein synthesis. It may also be involved in pleiotropic drug resistance. When overexpressed it confers increased resistance to cisplatin, the DNA-alkylating agents methylmethanosulfonate, and mitomycin C, the antimalarial drugs quinidine, mefloquine, and chloroquine, and increases cellular tolerance to sodium and lithium. Preferentially binds 5'-TTACTAA-3'. This chain is AP-1-like transcription factor YAP4 (CIN5), found in Saccharomyces cerevisiae (strain ATCC 204508 / S288c) (Baker's yeast).